Here is a 380-residue protein sequence, read N- to C-terminus: ATPase ASNA1 homolog (380 aa).

ATP is bound at residue 48 to 55; sequence KGGVGKTT. Residue D77 is part of the active site. ATP contacts are provided by E248 and N275.

It belongs to the arsA ATPase family. As to quaternary structure, homodimer.

The protein localises to the cytoplasm. Its subcellular location is the endoplasmic reticulum. Functionally, ATPase required for the post-translational delivery of tail-anchored (TA) proteins to the endoplasmic reticulum. Recognizes and selectively binds the transmembrane domain of TA proteins in the cytosol. This complex then targets to the endoplasmic reticulum by membrane-bound receptors, where the tail-anchored protein is released for insertion. This process is regulated by ATP binding and hydrolysis. ATP binding drives the homodimer towards the closed dimer state, facilitating recognition of newly synthesized TA membrane proteins. ATP hydrolysis is required for insertion. Subsequently, the homodimer reverts towards the open dimer state, lowering its affinity for the membrane-bound receptor, and returning it to the cytosol to initiate a new round of targeting. This is ATPase ASNA1 homolog from Plasmodium yoelii yoelii.